Reading from the N-terminus, the 341-residue chain is uncharacterized protein (341 aa).

10 consecutive transmembrane segments (helical) span residues A10–T30, P42–F62, L107–T127, V129–I149, F155–T175, A192–V212, L226–L246, L263–A283, L290–L310, and H313–V333.

This sequence belongs to the TPT transporter family.

It is found in the vacuole membrane. It localises to the golgi apparatus membrane. This is an uncharacterized protein from Schizosaccharomyces pombe (strain 972 / ATCC 24843) (Fission yeast).